We begin with the raw amino-acid sequence, 235 residues long: Small ribosomal subunit protein uS3 (235 aa).

A KH type-2 domain is found at 39–107; sequence VRQFLNKELA…PAQINIAEVK (69 aa). Residues 216–235 form a disordered region; it reads QPEQQPTDKPKKVPRGKGRK.

The protein belongs to the universal ribosomal protein uS3 family. As to quaternary structure, part of the 30S ribosomal subunit. Forms a tight complex with proteins S10 and S14.

Its function is as follows. Binds the lower part of the 30S subunit head. Binds mRNA in the 70S ribosome, positioning it for translation. This is Small ribosomal subunit protein uS3 from Aggregatibacter actinomycetemcomitans (Actinobacillus actinomycetemcomitans).